The following is a 1284-amino-acid chain: Kinesin-like protein KIN-4C (1284 aa).

Residues 12–364 (SVKVVVNIRP…LKYANRARNI (353 aa)) enclose the Kinesin motor domain. 91 to 98 (GQTGSGKT) lines the ATP pocket. Coiled-coil stretches lie at residues 407–445 (SAALEELQLLQQKVSLLELKNSELNHELKERELSYEQLA), 561–711 (RDHS…QFRS), and 911–950 (MCKEKEHLICDLKEKVVALNGRIRQLETQVKDLNNQNMLL). Disordered regions lie at residues 1040-1070 (RRQTVSSHLNPNPGSGTTQKSAKSEMASQEK) and 1158-1284 (MSEK…NHLR). Residues 1043–1070 (TVSSHLNPNPGSGTTQKSAKSEMASQEK) show a composition bias toward polar residues. 2 stretches are compositionally biased toward basic and acidic residues: residues 1158–1172 (MSEKEAQETKSRKPL) and 1275–1284 (NANEKENHLR).

Belongs to the TRAFAC class myosin-kinesin ATPase superfamily. Kinesin family. KIN-4 subfamily. In terms of assembly, homodimer.

Microtubule-dependent motor protein involved in the control of the oriented deposition of cellulose microfibrils. The chain is Kinesin-like protein KIN-4C from Oryza sativa subsp. japonica (Rice).